The following is a 360-amino-acid chain: Tryptophan--tRNA ligase, mitochondrial (360 aa).

Residues glutamine 38 and histidine 44–asparagine 47 each bind ATP. The 'HIGH' region motif lies at proline 39–asparagine 47. Aspartate 168 lines the L-tryptophan pocket. ATP is bound by residues glycine 180–aspartate 182 and lysine 229–serine 233. The segment covering isoleucine 220–methionine 230 has biased composition (basic and acidic residues). The segment at isoleucine 220–isoleucine 241 is disordered. Positions lysine 229–serine 233 match the 'KMSKS' region motif.

This sequence belongs to the class-I aminoacyl-tRNA synthetase family.

Its subcellular location is the mitochondrion matrix. It catalyses the reaction tRNA(Trp) + L-tryptophan + ATP = L-tryptophyl-tRNA(Trp) + AMP + diphosphate + H(+). Catalyzes the attachment of tryptophan to tRNA(Trp). The sequence is that of Tryptophan--tRNA ligase, mitochondrial from Caenorhabditis elegans.